The primary structure comprises 161 residues: Putative 2'-deoxynucleoside 5'-phosphate N-hydrolase 1 (161 aa).

Substrate-binding positions include 27–33 (FLSGSIR), Y42, H60, E106, and 128–130 (SSM).

The protein belongs to the 2'-deoxynucleoside 5'-phosphate N-hydrolase 1 family. As to quaternary structure, monomer and homodimer.

It carries out the reaction a pyrimidine 2'-deoxyribonucleoside 5'-phosphate + H2O = a pyrimidine nucleobase + 2-deoxy-D-ribose 5-phosphate. It catalyses the reaction a purine 2'-deoxyribonucleoside 5'-phosphate + H2O = a purine nucleobase + 2-deoxy-D-ribose 5-phosphate. Functionally, catalyzes the cleavage of the N-glycosidic bond of deoxyribonucleoside 5'-monophosphates to yield deoxyribose 5-phosphate and a purine or pyrimidine base. In Methanosarcina mazei (strain ATCC BAA-159 / DSM 3647 / Goe1 / Go1 / JCM 11833 / OCM 88) (Methanosarcina frisia), this protein is Putative 2'-deoxynucleoside 5'-phosphate N-hydrolase 1.